A 117-amino-acid chain; its full sequence is Hainantoxin-XV-2 (117 aa).

Positions M1–S20 are cleaved as a signal peptide. The disordered stretch occupies residues S20–E55. A propeptide spanning residues S21 to R56 is cleaved from the precursor. Basic and acidic residues predominate over residues N23 to E55. Intrachain disulfides connect C58–C72, C65–C78, C69–C115, and C71–C91.

It belongs to the neurotoxin 03 (Tx2) family. 02 subfamily. HNTX-XV sub-subfamily. Expressed by the venom gland.

It is found in the secreted. In terms of biological role, putative ion channel inhibitor. This is Hainantoxin-XV-2 from Cyriopagopus hainanus (Chinese bird spider).